Reading from the N-terminus, the 377-residue chain is 2-iminoacetate synthase (377 aa).

The Radical SAM core domain occupies 71 to 301 (NTVSFYVPLY…PEIELSLSTR (231 aa)). [4Fe-4S] cluster is bound by residues C85, C89, and C92.

It belongs to the radical SAM superfamily. ThiH family. In terms of assembly, forms a heterodimer with ThiG. The cofactor is [4Fe-4S] cluster.

The enzyme catalyses L-tyrosine + S-adenosyl-L-methionine + NADPH = 2-iminoacetate + 4-methylphenol + 5'-deoxyadenosine + L-methionine + NADP(+). Its pathway is cofactor biosynthesis; thiamine diphosphate biosynthesis. Functionally, catalyzes the radical-mediated cleavage of tyrosine to 2-iminoacetate and 4-cresol. This Escherichia coli (strain K12) protein is 2-iminoacetate synthase (thiH).